The chain runs to 279 residues: Oxygen-dependent coproporphyrinogen-III oxidase (279 aa).

Residue S102 coordinates substrate. 2 residues coordinate a divalent metal cation: H106 and H116. The Proton donor role is filled by H116. 118–120 is a substrate binding site; the sequence is NTR. Residues H149 and H179 each contribute to the a divalent metal cation site. Positions 244-279 are important for dimerization; that stretch reads YVEFNLLYDRGTKFGLMTDGNIEAILMSLPPVVKFN.

Belongs to the aerobic coproporphyrinogen-III oxidase family. Homodimer. A divalent metal cation is required as a cofactor.

It is found in the cytoplasm. It carries out the reaction coproporphyrinogen III + O2 + 2 H(+) = protoporphyrinogen IX + 2 CO2 + 2 H2O. The protein operates within porphyrin-containing compound metabolism; protoporphyrin-IX biosynthesis; protoporphyrinogen-IX from coproporphyrinogen-III (O2 route): step 1/1. Involved in the heme biosynthesis. Catalyzes the aerobic oxidative decarboxylation of propionate groups of rings A and B of coproporphyrinogen-III to yield the vinyl groups in protoporphyrinogen-IX. The chain is Oxygen-dependent coproporphyrinogen-III oxidase from Rickettsia typhi (strain ATCC VR-144 / Wilmington).